Here is a 61-residue protein sequence, read N- to C-terminus: uncharacterized protein (61 aa).

The first 30 residues, methionine 1–leucine 30, serve as a signal peptide directing secretion.

This is an uncharacterized protein from Archaeoglobus fulgidus (strain ATCC 49558 / DSM 4304 / JCM 9628 / NBRC 100126 / VC-16).